Consider the following 481-residue polypeptide: Aspartyl/glutamyl-tRNA(Asn/Gln) amidotransferase subunit B (481 aa).

The protein belongs to the GatB/GatE family. GatB subfamily. Heterotrimer of A, B and C subunits.

It catalyses the reaction L-glutamyl-tRNA(Gln) + L-glutamine + ATP + H2O = L-glutaminyl-tRNA(Gln) + L-glutamate + ADP + phosphate + H(+). The catalysed reaction is L-aspartyl-tRNA(Asn) + L-glutamine + ATP + H2O = L-asparaginyl-tRNA(Asn) + L-glutamate + ADP + phosphate + 2 H(+). Allows the formation of correctly charged Asn-tRNA(Asn) or Gln-tRNA(Gln) through the transamidation of misacylated Asp-tRNA(Asn) or Glu-tRNA(Gln) in organisms which lack either or both of asparaginyl-tRNA or glutaminyl-tRNA synthetases. The reaction takes place in the presence of glutamine and ATP through an activated phospho-Asp-tRNA(Asn) or phospho-Glu-tRNA(Gln). In Pseudomonas fluorescens (strain SBW25), this protein is Aspartyl/glutamyl-tRNA(Asn/Gln) amidotransferase subunit B.